Here is a 335-residue protein sequence, read N- to C-terminus: L-tyrosine isonitrile synthase (335 aa).

This sequence belongs to the isocyanide synthase family.

It carries out the reaction D-ribulose 5-phosphate + L-tyrosine = (2S)-3-(4-hydroxyphenyl)-2-isocyanopropanoate + hydroxyacetone + formaldehyde + phosphate + H2O + H(+). Involved in the biosynthesis of rhabduscin, a tyrosine derivative which is a potent inhibitor of phenoloxidase, a key component of the insect's innate immune system. Responsible for the synthesis of the isonitrile group on tyrosine using the C2 of ribulose 5-phosphate as the source of the carbon atom. This is L-tyrosine isonitrile synthase from Xenorhabdus nematophila (strain ATCC 19061 / DSM 3370 / CCUG 14189 / LMG 1036 / NCIMB 9965 / AN6).